The primary structure comprises 1213 residues: tRNA wybutosine-synthesizing protein 4 (1213 aa).

Low complexity-rich tracts occupy residues 1 to 13 (METT…PATT) and 39 to 52 (ATTT…TTPT). A disordered region spans residues 1 to 76 (METTEEVVAP…DDQVMGTNNS (76 aa)). Basic and acidic residues predominate over residues 53-67 (HNEHASAKDPRKAQD). S-adenosyl-L-methionine-binding residues include Arg117, Gly148, and Asp180. Low complexity predominate over residues 215–248 (STPAATTTAAATTTTTTELKTTAATASSTSTEAP). The segment at 215-272 (STPAATTTAAATTTTTTELKTTAATASSTSTEAPQKPKKSPKPKDKSKAARAPAPTTA) is disordered. Residues 289 to 290 (DL) and Glu318 contribute to the S-adenosyl-L-methionine site. Residues 879–900 (EPRSLPLRNQAPNGAEGNANGS) are disordered. One can recognise a JmjC domain in the interval 1006–1166 (PTEKPAVLSD…YAAGKDVYGN (161 aa)).

This sequence belongs to the methyltransferase superfamily. LCMT family.

The enzyme catalyses 7-[(3S)-3-amino-3-carboxypropyl]wyosine(37) in tRNA(Phe) + S-adenosyl-L-methionine = 7-[(3S)-(3-amino-3-methoxycarbonyl)propyl]wyosine(37) in tRNA(Phe) + S-adenosyl-L-homocysteine. It catalyses the reaction 7-[(3S)-(3-amino-3-methoxycarbonyl)propyl]wyosine(37) in tRNA(Phe) + S-adenosyl-L-methionine + CO2 = wybutosine(37) in tRNA(Phe) + S-adenosyl-L-homocysteine + 2 H(+). It functions in the pathway tRNA modification; wybutosine-tRNA(Phe) biosynthesis. Functionally, probable S-adenosyl-L-methionine-dependent methyltransferase that acts as a component of the wybutosine biosynthesis pathway. Wybutosine is a hyper modified guanosine with a tricyclic base found at the 3'-position adjacent to the anticodon of eukaryotic phenylalanine tRNA. May methylate the carboxyl group of leucine residues to form alpha-leucine ester residues. This Neurospora crassa (strain ATCC 24698 / 74-OR23-1A / CBS 708.71 / DSM 1257 / FGSC 987) protein is tRNA wybutosine-synthesizing protein 4 (lcm-2).